We begin with the raw amino-acid sequence, 355 residues long: NADH dehydrogenase [ubiquinone] 1 alpha subcomplex subunit 10, mitochondrial (355 aa).

A mitochondrion-targeting transit peptide spans 1 to 35 (MALRLLKLGATSASVRVVAAGAQRVRGIHSSVQCK). Ser250 is modified (phosphoserine; by PINK1). Residue Lys285 is modified to N6-succinyllysine.

It belongs to the complex I NDUFA10 subunit family. Complex I is composed of 45 different subunits. This a component of the hydrophobic protein fraction. It depends on FAD as a cofactor. Post-translationally, phosphorylation at Ser-250 by PINK1 is required for the binding and/or reduction of the complex I substrate ubiquinone.

Its subcellular location is the mitochondrion matrix. Accessory subunit of the mitochondrial membrane respiratory chain NADH dehydrogenase (Complex I), that is believed not to be involved in catalysis. Complex I functions in the transfer of electrons from NADH to the respiratory chain. The immediate electron acceptor for the enzyme is believed to be ubiquinone. This chain is NADH dehydrogenase [ubiquinone] 1 alpha subcomplex subunit 10, mitochondrial (NDUFA10), found in Pongo pygmaeus (Bornean orangutan).